The following is a 546-amino-acid chain: Chaperonin GroEL (546 aa).

Residues 30 to 33 (TLGP), K51, 87 to 91 (DGTTT), G415, 479 to 481 (NAA), and D495 contribute to the ATP site. The segment at 526-546 (KEDAPMPGGMPGGMGGMGMDM) is disordered. The segment covering 534–546 (GMPGGMGGMGMDM) has biased composition (gly residues).

The protein belongs to the chaperonin (HSP60) family. In terms of assembly, forms a cylinder of 14 subunits composed of two heptameric rings stacked back-to-back. Interacts with the co-chaperonin GroES.

It localises to the cytoplasm. It catalyses the reaction ATP + H2O + a folded polypeptide = ADP + phosphate + an unfolded polypeptide.. Functionally, together with its co-chaperonin GroES, plays an essential role in assisting protein folding. The GroEL-GroES system forms a nano-cage that allows encapsulation of the non-native substrate proteins and provides a physical environment optimized to promote and accelerate protein folding. In Burkholderia thailandensis, this protein is Chaperonin GroEL.